The following is a 285-amino-acid chain: Chromatin modification-related protein YNG2 (285 aa).

Disordered regions lie at residues 1-24 (MSFE…SNLK) and 155-201 (RTVA…GANF). Residues 8–24 (DPSSALEQATQDVSNLK) show a composition bias toward polar residues. Residues 10 to 36 (SSALEQATQDVSNLKSESRFLLEEIRA) are a coiled coil. The segment at 224-273 (QLYCFCQSVSYGEMVACDGPNCKYEWFHYGCVNLDEPPKGQWYCPECRQE) adopts a PHD-type zinc-finger fold. Residues C227, C229, C240, C245, H251, C254, C267, and C270 each coordinate Zn(2+).

The protein belongs to the ING family. As to quaternary structure, interacts with H3K4me3 and to a lesser extent with H3K4me2. Component of the NuA4 histone acetyltransferase complex.

The protein resides in the nucleus. Functionally, component of the NuA4 histone acetyltransferase complex which is involved in transcriptional activation of selected genes principally by acetylation of nucleosomal histone H4 and H2A. The NuA4 complex is also involved in DNA repair. Involved in cell cycle progression and meiosis. The protein is Chromatin modification-related protein YNG2 (YNG2) of Eremothecium gossypii (strain ATCC 10895 / CBS 109.51 / FGSC 9923 / NRRL Y-1056) (Yeast).